The sequence spans 506 residues: tRNA (guanine(6)-N(2))-methyltransferase THUMP3 (506 aa).

A disordered region spans residues 144-172 (KTKRRKLNPNSSKQKIDNGRGDTTVEKDV). Residues 157 to 172 (QKIDNGRGDTTVEKDV) are compositionally biased toward basic and acidic residues. The THUMP domain maps to 170–286 (KDVKKELTNS…DNEVVVGIAL (117 aa)).

It belongs to the methyltransferase superfamily. As to quaternary structure, part of the heterodimeric THUMPD3-TRM112 methyltransferase complex; this complex forms an active tRNA methyltransferase, where TRMT112 acts as an activator of the catalytic subunit THUMPD3.

The protein localises to the cytoplasm. It carries out the reaction guanosine(6) in tRNA + S-adenosyl-L-methionine = N(2)-methylguanosine(6) in tRNA + S-adenosyl-L-homocysteine + H(+). The catalysed reaction is guanosine(7) in tRNA + S-adenosyl-L-methionine = N(2)-methylguanosine(7) in tRNA + S-adenosyl-L-homocysteine + H(+). Its function is as follows. Catalytic subunit of the THUMPD3-TRM112 methyltransferase complex, that specifically mediates the S-adenosyl-L-methionine-dependent N(2)-methylation of guanosine nucleotide at position 6 (m2G6) in tRNAs. This is one of the major tRNA (guanine-N(2))-methyltransferases. Also catalyzes the S-adenosyl-L-methionine-dependent N(2)-methylation of guanosine nucleotide at position 7 of tRNA(Trp). The protein is tRNA (guanine(6)-N(2))-methyltransferase THUMP3 of Bos taurus (Bovine).